A 127-amino-acid chain; its full sequence is Large ribosomal subunit protein bL19 (127 aa).

The protein belongs to the bacterial ribosomal protein bL19 family.

Functionally, this protein is located at the 30S-50S ribosomal subunit interface and may play a role in the structure and function of the aminoacyl-tRNA binding site. This Cupriavidus pinatubonensis (strain JMP 134 / LMG 1197) (Cupriavidus necator (strain JMP 134)) protein is Large ribosomal subunit protein bL19.